The chain runs to 276 residues: Bifunctional esterase/perhydrolase DCH (276 aa).

The AB hydrolase-1 domain occupies 23 to 254 (PVIFFHHGWP…NGKLISYPGF (232 aa)). Residues Ser-97, Asp-227, and His-256 contribute to the active site.

The protein belongs to the AB hydrolase superfamily. Bacterial non-heme haloperoxidase / perhydrolase family. Homodimer.

It carries out the reaction 3,4-dihydrocoumarin + H2O = 3-(2-hydroxyphenyl)propanoate + H(+). It catalyses the reaction peracetic acid + H2O = acetate + H2O2 + H(+). The enzyme catalyses a percarboxylic acid + H2O = a carboxylate + H2O2 + H(+). Its activity is regulated as follows. Inhibited by the serine protease inhibitors diisopropyl fluorophosphate and phenylmethanesulfonyl fluoride. Functionally, multifunctional enzyme, which shows esterase and perhydrolase activities, and is capable of organic acid-assisted bromination of organic compounds. Catalyzes the hydrolysis of 3,4-dihydrocoumarin. Aromatic lactones other than 3,4-dihydrocoumarin, such as 2-coumaranone and homogentisic acid lactone, are also substrates, but their activities relative to that of 3,4-dihydrocoumarin are quite low. Also catalyzes the hydrolysis of several linear esters, with specificity toward methyl esters. In addition, shows perhydrolase activity and catalyzes the dose- and time-dependent degradation of peracetic acid, a broad-spectrum biocide, to acetic acid and hydrogen peroxide. It suggests that in vivo DCH may play a role in the oxidative stress defense system and detoxify peroxoacids in conjunction with the catalase, i.e. peroxoacids are first hydrolyzed to the corresponding acids and hydrogen peroxide by DCH, and then the resulting hydrogen peroxide is degraded by the catalase. Also shows organic acid-assisted bromination activity toward monochlorodimedon when incubated with hydrogen peroxide and dihydrocoumarin or an organic acid, such as acetate and n-butyrate. The sequence is that of Bifunctional esterase/perhydrolase DCH from Acinetobacter calcoaceticus.